Reading from the N-terminus, the 54-residue chain is Ovomucoid (54 aa).

The 51-residue stretch at 4 to 54 (VDCSDYPKPVCPLDYMPLCGSDSKTYSNKCNFCNAVVESSGTLTLRHFGKC) folds into the Kazal-like domain. Cystine bridges form between Cys6–Cys36, Cys14–Cys33, and Cys22–Cys54.

This is the only ovomucoid third domain known to be not glycosylated.

The protein localises to the secreted. The polypeptide is Ovomucoid (Struthio camelus (Common ostrich)).